A 186-amino-acid polypeptide reads, in one-letter code: Small ribosomal subunit protein eS7 (186 aa).

Belongs to the eukaryotic ribosomal protein eS7 family. In terms of assembly, component of the small ribosomal subunit. Mature ribosomes consist of a small (40S) and a large (60S) subunit. The 40S subunit contains about 32 different proteins and 1 molecule of RNA (18S). The 60S subunit contains 45 different proteins and 3 molecules of RNA (25S, 5.8S and 5S).

The protein resides in the cytoplasm. Component of the ribosome, a large ribonucleoprotein complex responsible for the synthesis of proteins in the cell. The small ribosomal subunit (SSU) binds messenger RNAs (mRNAs) and translates the encoded message by selecting cognate aminoacyl-transfer RNA (tRNA) molecules. The large subunit (LSU) contains the ribosomal catalytic site termed the peptidyl transferase center (PTC), which catalyzes the formation of peptide bonds, thereby polymerizing the amino acids delivered by tRNAs into a polypeptide chain. The nascent polypeptides leave the ribosome through a tunnel in the LSU and interact with protein factors that function in enzymatic processing, targeting, and the membrane insertion of nascent chains at the exit of the ribosomal tunnel. RPS7A is involved in nucleolar processing of pre-18S ribosomal RNA and ribosome assembly. The protein is Small ribosomal subunit protein eS7 (RPS7A) of Candida albicans (strain SC5314 / ATCC MYA-2876) (Yeast).